A 209-amino-acid chain; its full sequence is ATP-dependent dethiobiotin synthetase BioD (209 aa).

Residue 13–18 (DVGKTV) coordinates ATP. T17 lines the Mg(2+) pocket. K33 is an active-site residue. Residue E100 coordinates Mg(2+). Residues 100-103 (EGAG) and 184-186 (PRL) each bind ATP.

The protein belongs to the dethiobiotin synthetase family. In terms of assembly, homodimer. Mg(2+) serves as cofactor.

The protein localises to the cytoplasm. It carries out the reaction (7R,8S)-7,8-diammoniononanoate + CO2 + ATP = (4R,5S)-dethiobiotin + ADP + phosphate + 3 H(+). The protein operates within cofactor biosynthesis; biotin biosynthesis; biotin from 7,8-diaminononanoate: step 1/2. Its function is as follows. Catalyzes a mechanistically unusual reaction, the ATP-dependent insertion of CO2 between the N7 and N8 nitrogen atoms of 7,8-diaminopelargonic acid (DAPA, also called 7,8-diammoniononanoate) to form a ureido ring. This is ATP-dependent dethiobiotin synthetase BioD from Rhizorhabdus wittichii (strain DSM 6014 / CCUG 31198 / JCM 15750 / NBRC 105917 / EY 4224 / RW1) (Sphingomonas wittichii).